Consider the following 124-residue polypeptide: MENTNIVKATFDTETLEGQIKIFNAQTGGGQSFKNLPDGTIIEATAIAQYKQVSDTYGDAKEETVTTIFAADGSLYSAISKTVAEAASDLIDLVTRHKLETFKVKVVQGTSSKGNVFFSLQLSL.

The protein belongs to the phi29likevirus single-strand-binding protein family. Monomer.

Functionally, single-stranded DNA binding protein required for the elongation during viral DNA replication by strand displacement. Displaced viral DNA strands are transiently coated with the ssDNA-binding protein and therefore protected againt nucleases. The latter is then probably removed by the replisome that performs lagging strand synthesis or during the events that lead up to the recombination process. Has helix-destabilizing activity since it removes secondary structure from the ssDNA in replicative intermediates. This Bacillus subtilis (Bacteriophage PZA) protein is Single-stranded DNA-binding protein (5).